We begin with the raw amino-acid sequence, 269 residues long: MAPKAPKWRELADRFAEQIRTGDYGPGEQLPQIRDLVEAGEGSKETVHRAYKALETEGLVAMSRGHGTVVRRKAPLKRLGIGRYDKAKWRDGDEVAFIADRVASGRSYRRNEQTQTVSRVKASAAVATALGLPEGADVYARARLVKEGTQPTHTLTSYYRPEHVEGTRIVDPTPGPAGRGGGFRVLYDAGYEIDHMTEEIFARVPSAEEAQLLQLAPGEWVVELHRTTRTVDGTVVEFAIGVHAGTRFAWSYDFKVPDSAMTEAEDESK.

The 69-residue stretch at alanine 5–lysine 73 folds into the HTH gntR-type domain. The segment at residues isoleucine 33–lysine 52 is a DNA-binding region (H-T-H motif).

The imp locus inhibits the extrachromosomal maintenance of the Streptomyces plasmid SLP1. This is an uncharacterized protein from Streptomyces coelicolor (strain ATCC BAA-471 / A3(2) / M145).